The sequence spans 613 residues: Dihydroxy-acid dehydratase (613 aa).

A Mg(2+)-binding site is contributed by Asp-81. Cys-122 contacts [2Fe-2S] cluster. Positions 123 and 124 each coordinate Mg(2+). Lys-124 carries the N6-carboxylysine modification. Cys-195 lines the [2Fe-2S] cluster pocket. Glu-491 is a Mg(2+) binding site. Ser-517 serves as the catalytic Proton acceptor.

The protein belongs to the IlvD/Edd family. Homodimer. It depends on [2Fe-2S] cluster as a cofactor. The cofactor is Mg(2+).

It catalyses the reaction (2R)-2,3-dihydroxy-3-methylbutanoate = 3-methyl-2-oxobutanoate + H2O. It carries out the reaction (2R,3R)-2,3-dihydroxy-3-methylpentanoate = (S)-3-methyl-2-oxopentanoate + H2O. It functions in the pathway amino-acid biosynthesis; L-isoleucine biosynthesis; L-isoleucine from 2-oxobutanoate: step 3/4. It participates in amino-acid biosynthesis; L-valine biosynthesis; L-valine from pyruvate: step 3/4. Functionally, functions in the biosynthesis of branched-chain amino acids. Catalyzes the dehydration of (2R,3R)-2,3-dihydroxy-3-methylpentanoate (2,3-dihydroxy-3-methylvalerate) into 2-oxo-3-methylpentanoate (2-oxo-3-methylvalerate) and of (2R)-2,3-dihydroxy-3-methylbutanoate (2,3-dihydroxyisovalerate) into 2-oxo-3-methylbutanoate (2-oxoisovalerate), the penultimate precursor to L-isoleucine and L-valine, respectively. The chain is Dihydroxy-acid dehydratase from Buchnera aphidicola subsp. Schlechtendalia chinensis.